The sequence spans 207 residues: dITP/XTP pyrophosphatase (207 aa).

11-16 provides a ligand contact to substrate; sequence TGNPGK. The active-site Proton acceptor is the aspartate 72. Aspartate 72 is a binding site for Mg(2+). Substrate-binding positions include serine 73, 154–157, lysine 177, and 182–183; these read FGYD and HR.

The protein belongs to the HAM1 NTPase family. As to quaternary structure, homodimer. Requires Mg(2+) as cofactor.

The catalysed reaction is XTP + H2O = XMP + diphosphate + H(+). The enzyme catalyses dITP + H2O = dIMP + diphosphate + H(+). It catalyses the reaction ITP + H2O = IMP + diphosphate + H(+). Functionally, pyrophosphatase that catalyzes the hydrolysis of nucleoside triphosphates to their monophosphate derivatives, with a high preference for the non-canonical purine nucleotides XTP (xanthosine triphosphate), dITP (deoxyinosine triphosphate) and ITP. Seems to function as a house-cleaning enzyme that removes non-canonical purine nucleotides from the nucleotide pool, thus preventing their incorporation into DNA/RNA and avoiding chromosomal lesions. The sequence is that of dITP/XTP pyrophosphatase from Thermus thermophilus (strain ATCC 27634 / DSM 579 / HB8).